A 429-amino-acid chain; its full sequence is Serine hydroxymethyltransferase 1 (429 aa).

(6S)-5,6,7,8-tetrahydrofolate-binding positions include Leu125 and 129-131 (GHL). The residue at position 234 (Lys234) is an N6-(pyridoxal phosphate)lysine.

Belongs to the SHMT family. As to quaternary structure, homodimer. The cofactor is pyridoxal 5'-phosphate.

Its subcellular location is the cytoplasm. It catalyses the reaction (6R)-5,10-methylene-5,6,7,8-tetrahydrofolate + glycine + H2O = (6S)-5,6,7,8-tetrahydrofolate + L-serine. Its pathway is one-carbon metabolism; tetrahydrofolate interconversion. It functions in the pathway amino-acid biosynthesis; glycine biosynthesis; glycine from L-serine: step 1/1. Functionally, catalyzes the reversible interconversion of serine and glycine with tetrahydrofolate (THF) serving as the one-carbon carrier. This reaction serves as the major source of one-carbon groups required for the biosynthesis of purines, thymidylate, methionine, and other important biomolecules. Also exhibits THF-independent aldolase activity toward beta-hydroxyamino acids, producing glycine and aldehydes, via a retro-aldol mechanism. In Agrobacterium fabrum (strain C58 / ATCC 33970) (Agrobacterium tumefaciens (strain C58)), this protein is Serine hydroxymethyltransferase 1.